Reading from the N-terminus, the 682-residue chain is RNA helicase NPH-II (682 aa).

Positions 181-354 (FELLRKRKQI…EFLPDVEFYH (174 aa)) constitute a Helicase ATP-binding domain. 194–201 (GSTGIGKT) is a binding site for ATP. The DEXH box motif lies at 303–306 (DEIH). Residues 386–551 (NISTTLNWCR…KFKLSLPNDL (166 aa)) enclose the Helicase C-terminal domain.

This sequence belongs to the DEAD box helicase family. DEAH subfamily. As to quaternary structure, monomer.

It localises to the virion. It carries out the reaction ATP + H2O = ADP + phosphate + H(+). NTP-dependent helicase that catalyzes unidirectional unwinding of 3'tailed duplex RNAs and plays an important role during transcription of early mRNAs, presumably by preventing R-loop formation behind the elongating RNA polymerase. Might also play a role in the export of newly synthesized mRNA chains out of the core into the cytoplasm. Required for replication and propagation of viral particles. The chain is RNA helicase NPH-II (NPH2) from Vertebrata (FPV).